The chain runs to 152 residues: Large ribosomal subunit protein bL9 (152 aa).

It belongs to the bacterial ribosomal protein bL9 family.

Its function is as follows. Binds to the 23S rRNA. The chain is Large ribosomal subunit protein bL9 from Prochlorococcus marinus (strain MIT 9211).